Reading from the N-terminus, the 1215-residue chain is Inner capsid protein VP3 (1215 aa).

The disordered stretch occupies residues 1 to 81 (MPRRPRRNAK…RVDNDGDVIT (81 aa)). A compositionally biased stretch (low complexity) spans 21-44 (LVAPAANASVSSTVNTTTSPTLAA). The segment at 118 to 141 (YRCNVCNAEFPSMSAMTEHLRTSH) adopts a C2H2-type zinc-finger fold.

It belongs to the turreted BTV-fold inner capsid family. Homodecamer; each decamer is made up of two conformers of VP2, called VP2A and VP2B. 12 homodecamers assemble to form an icosahedral capsid. Interacts with VP6.

It localises to the virion. Functionally, inner capsid protein that self-assembles to form an icosahedral capsid with a T=2 symmetry, which consists of 120 copies of VP2, with channels at each of its five-fold vertices. This capsid constitutes the innermost concentric layer of the viral mature particle. This Ctenopharyngodon idella (Grass carp) protein is Inner capsid protein VP3 (S3).